We begin with the raw amino-acid sequence, 287 residues long: Protease HtpX (287 aa).

2 helical membrane-spanning segments follow: residues 4–24 and 33–53; these read IFLL…VMSI and GGLL…SLAI. Zn(2+) is bound at residue histidine 139. The active site involves glutamate 140. Histidine 143 contacts Zn(2+). Helical transmembrane passes span 154–174 and 195–215; these read LIQG…AGII and AVVF…VAYF. Residue glutamate 220 coordinates Zn(2+).

Belongs to the peptidase M48B family. Zn(2+) serves as cofactor.

The protein resides in the cell inner membrane. The sequence is that of Protease HtpX from Shewanella sp. (strain ANA-3).